The primary structure comprises 117 residues: Ribonuclease P protein component (117 aa).

This sequence belongs to the RnpA family. As to quaternary structure, consists of a catalytic RNA component (M1 or rnpB) and a protein subunit.

It catalyses the reaction Endonucleolytic cleavage of RNA, removing 5'-extranucleotides from tRNA precursor.. RNaseP catalyzes the removal of the 5'-leader sequence from pre-tRNA to produce the mature 5'-terminus. It can also cleave other RNA substrates such as 4.5S RNA. The protein component plays an auxiliary but essential role in vivo by binding to the 5'-leader sequence and broadening the substrate specificity of the ribozyme. The polypeptide is Ribonuclease P protein component (Staphylococcus aureus (strain bovine RF122 / ET3-1)).